The primary structure comprises 277 residues: Large ribosomal subunit protein uL2 (277 aa).

Residues threonine 219–lysine 277 are disordered. Positions alanine 264–lysine 277 are enriched in basic and acidic residues.

Belongs to the universal ribosomal protein uL2 family. In terms of assembly, part of the 50S ribosomal subunit. Forms a bridge to the 30S subunit in the 70S ribosome.

Its function is as follows. One of the primary rRNA binding proteins. Required for association of the 30S and 50S subunits to form the 70S ribosome, for tRNA binding and peptide bond formation. It has been suggested to have peptidyltransferase activity; this is somewhat controversial. Makes several contacts with the 16S rRNA in the 70S ribosome. This Streptococcus pneumoniae serotype 2 (strain D39 / NCTC 7466) protein is Large ribosomal subunit protein uL2.